The primary structure comprises 408 residues: Probable acyl-CoA dehydrogenase 6 (408 aa).

The active-site Proton acceptor is glutamate 265.

This sequence belongs to the acyl-CoA dehydrogenase family. Homotetramer. Requires FAD as cofactor.

It carries out the reaction 3-methylbutanoyl-CoA + oxidized [electron-transfer flavoprotein] + H(+) = 3-methylbut-2-enoyl-CoA + reduced [electron-transfer flavoprotein]. The protein operates within amino-acid degradation; L-leucine degradation; (S)-3-hydroxy-3-methylglutaryl-CoA from 3-isovaleryl-CoA: step 1/3. This Caenorhabditis elegans protein is Probable acyl-CoA dehydrogenase 6 (acdh-6).